The primary structure comprises 410 residues: Shaggy-related protein kinase epsilon (410 aa).

The residue at position 2 (Ala2) is an N-acetylalanine. A Protein kinase domain is found at 74–358 (YMAERIVGQG…AMEAIVHPFF (285 aa)). ATP-binding positions include 80–88 (VGQGSFGIV) and Lys103. Asp199 serves as the catalytic Proton acceptor. A Phosphotyrosine modification is found at Tyr234.

The protein belongs to the protein kinase superfamily. CMGC Ser/Thr protein kinase family. GSK-3 subfamily. Binds to KIB1. Autophosphorylated mainly on threonine and serine residues.

The enzyme catalyses L-seryl-[protein] + ATP = O-phospho-L-seryl-[protein] + ADP + H(+). It carries out the reaction L-threonyl-[protein] + ATP = O-phospho-L-threonyl-[protein] + ADP + H(+). In terms of biological role, may mediate extracellular signals to regulate transcription in differentiating cells. This is Shaggy-related protein kinase epsilon (ASK5) from Arabidopsis thaliana (Mouse-ear cress).